The primary structure comprises 80 residues: Conotoxin Cl11.2 (80 aa).

Positions 1–19 (MKMSVTFLLILMILPLFTG) are cleaved as a signal peptide. A propeptide spanning residues 20-41 (EWQSGSRLSALKKRLLEKRLLQ) is cleaved from the precursor. Cystine bridges form between cysteine 45/cysteine 59, cysteine 52/cysteine 63, cysteine 58/cysteine 68, and cysteine 62/cysteine 74.

The protein belongs to the conotoxin I1 superfamily. As to expression, expressed by the venom duct.

It is found in the secreted. The protein is Conotoxin Cl11.2 of Californiconus californicus (California cone).